We begin with the raw amino-acid sequence, 147 residues long: MKLHELKPAEGAVRAKRRLGRGTATGQGKTAGRGQKGQWSRSGGGVRVGFEGGQMPLARRLPKRGFNNIFKKVYTEVNVEVLNRFENGTEITAELLKSTKTISKIGKDGIKILGEGNLEKALTVKAAKFTASAQEKIEKAGGKAELV.

The disordered stretch occupies residues 1-47 (MKLHELKPAEGAVRAKRRLGRGTATGQGKTAGRGQKGQWSRSGGGVR). Residues 23–35 (TATGQGKTAGRGQ) show a composition bias toward gly residues.

It belongs to the universal ribosomal protein uL15 family. Part of the 50S ribosomal subunit.

In terms of biological role, binds to the 23S rRNA. This Clostridioides difficile (strain 630) (Peptoclostridium difficile) protein is Large ribosomal subunit protein uL15.